A 315-amino-acid chain; its full sequence is G-box-binding factor 1 (315 aa).

Disordered stretches follow at residues 1–56 and 93–268; these read MGTS…GSPS and MPMP…RDEL. A compositionally biased stretch (pro residues) spans 46-56; the sequence is PFFPSPVGSPS. 2 stretches are compositionally biased toward polar residues: residues 133-164 and 178-187; these read GSGN…QEQG and ASSQSTTGEI. Positions 222 to 285 constitute a bZIP domain; it reads ELKRQKRKQS…DKLKSENNSI (64 aa). Positions 224-243 are basic motif; it reads KRQKRKQSNRESARRSRLRK. Polar residues predominate over residues 249-262; it reads QLQQRVESLSNENQ. The segment at 250-285 is leucine-zipper; that stretch reads LQQRVESLSNENQSLRDELQRLSSECDKLKSENNSI.

This sequence belongs to the bZIP family. Monomer and heterodimers with BZIP16 and BZIP68. Interacts with GIP1. Post-translationally, phosphorylated by CK2. Found in both light and dark grown leaves.

The protein localises to the nucleus. Functionally, binds to the G-box motif (5'-CCACGTGG-3') of the rbcS-1A gene promoter. G-box and G-box-like motifs are cis-acting elements defined in promoters of certain plant genes which are regulated by such diverse stimuli as light-induction or hormone control. Binds to the G-box motif 5'-CACGTG-3' of LHCB2.4 (At3g27690) promoter. May act as transcriptional activator in light-regulated expression of LHCB2.4. Probably binds DNA as monomer. DNA-binding activity is redox-dependent. In Arabidopsis thaliana (Mouse-ear cress), this protein is G-box-binding factor 1 (GBF1).